Consider the following 559-residue polypeptide: Glucose-6-phosphate isomerase (559 aa).

Catalysis depends on glutamate 352, which acts as the Proton donor. Residues histidine 383 and lysine 511 contribute to the active site.

This sequence belongs to the GPI family.

Its subcellular location is the cytoplasm. It catalyses the reaction alpha-D-glucose 6-phosphate = beta-D-fructose 6-phosphate. The protein operates within carbohydrate biosynthesis; gluconeogenesis. It participates in carbohydrate degradation; glycolysis; D-glyceraldehyde 3-phosphate and glycerone phosphate from D-glucose: step 2/4. Functionally, catalyzes the reversible isomerization of glucose-6-phosphate to fructose-6-phosphate. The chain is Glucose-6-phosphate isomerase from Chlorobaculum tepidum (strain ATCC 49652 / DSM 12025 / NBRC 103806 / TLS) (Chlorobium tepidum).